Reading from the N-terminus, the 368-residue chain is Ferredoxin--NADP reductase (368 aa).

Positions 56, 64, 69, 109, 144, 310, and 351 each coordinate FAD.

This sequence belongs to the ferredoxin--NADP reductase type 2 family. In terms of assembly, homodimer. Requires FAD as cofactor.

It carries out the reaction 2 reduced [2Fe-2S]-[ferredoxin] + NADP(+) + H(+) = 2 oxidized [2Fe-2S]-[ferredoxin] + NADPH. The chain is Ferredoxin--NADP reductase from Leptothrix cholodnii (strain ATCC 51168 / LMG 8142 / SP-6) (Leptothrix discophora (strain SP-6)).